We begin with the raw amino-acid sequence, 901 residues long: Core protein VP3 (901 aa).

It belongs to the orbivirus VP3 family.

Its subcellular location is the virion. Its function is as follows. The VP3 protein is one of the five proteins (with VP1, VP4, VP6 and VP7) which form the inner capsid of the virus. The protein is Core protein VP3 (Segment-3) of Antilocapra americana (Pronghorn).